The chain runs to 306 residues: Mycothiol acetyltransferase (306 aa).

2 consecutive N-acetyltransferase domains span residues 5–157 and 159–306; these read EIYE…EPAA and ITIR…HKKL. Glu36 is a 1D-myo-inositol 2-(L-cysteinylamino)-2-deoxy-alpha-D-glucopyranoside binding site. 82 to 84 serves as a coordination point for acetyl-CoA; sequence MLV. Residues Asp186, Lys227, and Glu238 each contribute to the 1D-myo-inositol 2-(L-cysteinylamino)-2-deoxy-alpha-D-glucopyranoside site. An acetyl-CoA-binding site is contributed by 242–244; it reads LGV. Tyr276 is a 1D-myo-inositol 2-(L-cysteinylamino)-2-deoxy-alpha-D-glucopyranoside binding site. 281-286 provides a ligand contact to acetyl-CoA; the sequence is NVRAVR.

The protein belongs to the acetyltransferase family. MshD subfamily. As to quaternary structure, monomer.

The catalysed reaction is 1D-myo-inositol 2-(L-cysteinylamino)-2-deoxy-alpha-D-glucopyranoside + acetyl-CoA = mycothiol + CoA + H(+). In terms of biological role, catalyzes the transfer of acetyl from acetyl-CoA to desacetylmycothiol (Cys-GlcN-Ins) to form mycothiol. This chain is Mycothiol acetyltransferase, found in Stackebrandtia nassauensis (strain DSM 44728 / CIP 108903 / NRRL B-16338 / NBRC 102104 / LLR-40K-21).